The following is a 239-amino-acid chain: DNA repair protein RecO (239 aa).

Belongs to the RecO family.

Functionally, involved in DNA repair and RecF pathway recombination. This Bifidobacterium animalis subsp. lactis (strain AD011) protein is DNA repair protein RecO.